The following is a 137-amino-acid chain: Large ribosomal subunit protein uL16c (137 aa).

This sequence belongs to the universal ribosomal protein uL16 family. In terms of assembly, part of the 50S ribosomal subunit.

Its subcellular location is the plastid. It localises to the chloroplast. This chain is Large ribosomal subunit protein uL16c, found in Adiantum capillus-veneris (Maidenhair fern).